The sequence spans 251 residues: tRNA (guanine-N(7)-)-methyltransferase (251 aa).

Positions M1–V29 are disordered. S-adenosyl-L-methionine contacts are provided by E84, E109, D136, and D159. D159 is a catalytic residue. Substrate is bound at residue K163. The tract at residues R165–R170 is interaction with RNA. Substrate-binding positions include D195 and T230–E233.

The protein belongs to the class I-like SAM-binding methyltransferase superfamily. TrmB family.

It catalyses the reaction guanosine(46) in tRNA + S-adenosyl-L-methionine = N(7)-methylguanosine(46) in tRNA + S-adenosyl-L-homocysteine. It participates in tRNA modification; N(7)-methylguanine-tRNA biosynthesis. Functionally, catalyzes the formation of N(7)-methylguanine at position 46 (m7G46) in tRNA. The polypeptide is tRNA (guanine-N(7)-)-methyltransferase (Acidovorax sp. (strain JS42)).